The following is a 198-amino-acid chain: Dynactin subunit 5 (198 aa).

Residues 179–188 show a composition bias toward polar residues; sequence NTPASKGLPS. The tract at residues 179-198 is disordered; sequence NTPASKGLPSTPTKLQTTTT. Residues 189–198 are compositionally biased toward low complexity; that stretch reads TPTKLQTTTT.

It belongs to the dynactin subunits 5/6 family. Dynactin subunit 5 subfamily. Member of the pointed-end complex of the dynactin shoulder complex.

It is found in the cytoplasm. The protein localises to the cytoskeleton. This chain is Dynactin subunit 5 (dynE), found in Dictyostelium discoideum (Social amoeba).